The primary structure comprises 393 residues: Na(+)/H(+) antiporter NhaA (393 aa).

12 helical membrane passes run 23-43 (AGGITLMAAAALALIVANSPF), 58-78 (LSLAHWINDALMAKFFLLVGL), 96-116 (MLPGIAAAGGVILPAIIFAVL), 126-146 (GWAVPSATDIAFALGVLSLLG), 155-175 (VFLATLAILDDLAAVVIIAIF), 178-198 (AEISMPYLGAAFITAAVLFVM), 201-221 (MGVVKLLPYLISAVILWFFVF), 224-244 (GVHATVAGVVAALMIPLKPAP), 265-285 (VAFIVVPIFGFANAGISFKGL), 298-318 (ILLGLFLGKQFGVFGAAWLAI), 334-354 (LYGVAILCGIGFTMSIFIGLL), and 367-387 (IGVLSGSALSAICGYLLLRAA).

Belongs to the NhaA Na(+)/H(+) (TC 2.A.33) antiporter family.

Its subcellular location is the cell inner membrane. It catalyses the reaction Na(+)(in) + 2 H(+)(out) = Na(+)(out) + 2 H(+)(in). Na(+)/H(+) antiporter that extrudes sodium in exchange for external protons. This Brucella suis (strain ATCC 23445 / NCTC 10510) protein is Na(+)/H(+) antiporter NhaA.